A 234-amino-acid polypeptide reads, in one-letter code: Phosphoglycolate phosphatase (234 aa).

Asp-8 acts as the Nucleophile in catalysis. Residues Asp-8 and Asp-10 each coordinate Mg(2+). Lys-155 contributes to the substrate binding site. The Mg(2+) site is built by Asp-178 and Asp-182.

This sequence belongs to the archaeal SPP-like hydrolase family. It depends on Mg(2+) as a cofactor.

It catalyses the reaction 2-phosphoglycolate + H2O = glycolate + phosphate. Its function is as follows. Catalyzes the dephosphorylation of 2-phosphoglycolate. The sequence is that of Phosphoglycolate phosphatase from Thermococcus sibiricus (strain DSM 12597 / MM 739).